Consider the following 402-residue polypeptide: uncharacterized protein (402 aa).

This sequence to M.genitalium MG148.

This is an uncharacterized protein from Caldicellulosiruptor sp. (strain Rt8B.4).